The sequence spans 179 residues: Stathmin-2 (179 aa).

Positions Met1–Tyr26 are membrane attachment. Ser16, Ser50, Ser62, Ser73, Ser80, and Ser97 each carry phosphoserine. In terms of domain architecture, SLD spans Asp38–Gly179. Residues Asp39 to Lys96 are regulatory/phosphorylation domain. Residues Pro74 to Gly179 are a coiled coil.

It belongs to the stathmin family. As to expression, expression is neuron-specific and found in cerebellum, forebrain, midbrain, tectum and spinal cord.

It is found in the cytoplasm. Its subcellular location is the perinuclear region. The protein localises to the cell projection. The protein resides in the growth cone. It localises to the membrane. It is found in the axon. Its subcellular location is the lamellipodium. Functionally, is a key regulator of neurite extension through regulation of microtubule instabilily. This chain is Stathmin-2 (STMN2), found in Gallus gallus (Chicken).